We begin with the raw amino-acid sequence, 473 residues long: Photosystem II CP43 reaction center protein (473 aa).

The propeptide occupies 1–14; that stretch reads MKTLYSLRRSYPVE. Thr15 carries the N-acetylthreonine modification. Thr15 is subject to Phosphothreonine. 5 helical membrane passes run 69–93, 134–155, 178–200, 255–275, and 291–312; these read LFEV…PHLA, LIGP…KDRN, KALY…RKIT, KPFA…LSYS, and WFNN…ASQA. Residue Glu367 coordinates [CaMn4O5] cluster. Residues 447 to 471 traverse the membrane as a helical segment; that stretch reads RARAAAAGFEKGIDRDFEPVLSMTP.

Belongs to the PsbB/PsbC family. PsbC subfamily. In terms of assembly, PSII is composed of 1 copy each of membrane proteins PsbA, PsbB, PsbC, PsbD, PsbE, PsbF, PsbH, PsbI, PsbJ, PsbK, PsbL, PsbM, PsbT, PsbX, PsbY, PsbZ, Psb30/Ycf12, at least 3 peripheral proteins of the oxygen-evolving complex and a large number of cofactors. It forms dimeric complexes. Binds multiple chlorophylls and provides some of the ligands for the Ca-4Mn-5O cluster of the oxygen-evolving complex. It may also provide a ligand for a Cl- that is required for oxygen evolution. PSII binds additional chlorophylls, carotenoids and specific lipids. is required as a cofactor.

Its subcellular location is the plastid. It is found in the chloroplast thylakoid membrane. Its function is as follows. One of the components of the core complex of photosystem II (PSII). It binds chlorophyll and helps catalyze the primary light-induced photochemical processes of PSII. PSII is a light-driven water:plastoquinone oxidoreductase, using light energy to abstract electrons from H(2)O, generating O(2) and a proton gradient subsequently used for ATP formation. The polypeptide is Photosystem II CP43 reaction center protein (Abies alba (Edeltanne)).